A 448-amino-acid polypeptide reads, in one-letter code: Glutamyl-tRNA reductase 2 (448 aa).

Substrate contacts are provided by residues 50–53 (TCER), S109, 114–116 (ESD), and Q120. Catalysis depends on C51, which acts as the Nucleophile. 190-195 (GTGQVA) lines the NADP(+) pocket. Residues 423–448 (DQAVPAYSPQPIGNTSNAAASATPRR) are disordered. Residues 433–442 (PIGNTSNAAA) are compositionally biased toward polar residues.

This sequence belongs to the glutamyl-tRNA reductase family. Homodimer.

The enzyme catalyses (S)-4-amino-5-oxopentanoate + tRNA(Glu) + NADP(+) = L-glutamyl-tRNA(Glu) + NADPH + H(+). It participates in porphyrin-containing compound metabolism; protoporphyrin-IX biosynthesis; 5-aminolevulinate from L-glutamyl-tRNA(Glu): step 1/2. Functionally, catalyzes the NADPH-dependent reduction of glutamyl-tRNA(Glu) to glutamate 1-semialdehyde (GSA). The polypeptide is Glutamyl-tRNA reductase 2 (Nocardioides sp. (strain ATCC BAA-499 / JS614)).